We begin with the raw amino-acid sequence, 80 residues long: Serine palmitoyltransferase small subunit A-A (80 aa).

The Cytoplasmic portion of the chain corresponds to 1 to 21 (MKVLCEDVNGPRSSLGRAWSH). The helical transmembrane segment at 22-38 (MSWLYYQYLLVTALYML) threads the bilayer. The Lumenal segment spans residues 39 to 43 (EPWER). The chain crosses the membrane as a helical span at residues 44-66 (TVFNSMLVSIVGMALYTGYIFMP). Topologically, residues 67–80 (QHILAILHYFEIVQ) are cytoplasmic.

The protein belongs to the SPTSS family. SPTSSA subfamily. As to quaternary structure, component of the serine palmitoyltransferase (SPT) complex, which is composed of SPTLC1, SPTLC2 or SPTLC3 and SPTSSA or SPTSSB. The heterodimer consisting of SPTLC1 and SPTLC2/SPTLC3 forms the catalytic core of the enzyme, while SPTSSA or SPTSSB subunits determine substrate specificity. SPT also interacts with ORMDL proteins, especially ORMDL3, which negatively regulate SPT activity in the presence of ceramides.

It is found in the endoplasmic reticulum membrane. Its pathway is lipid metabolism; sphingolipid metabolism. Functionally, component of the serine palmitoyltransferase multisubunit enzyme (SPT) that catalyzes the initial and rate-limiting step in sphingolipid biosynthesis by condensing L-serine and activated acyl-CoA (most commonly palmitoyl-CoA) to form long-chain bases. The SPT complex is composed of SPTLC1, SPTLC2 or SPTLC3 and SPTSSA or SPTSSB. Within this complex, the heterodimer consisting of SPTLC1 and SPTLC2/SPTLC3 forms the catalytic core. Within the SPT complex, SPTSSA stimulates the catalytic activity and plays a role in substrate specificity, which depends upon the overall complex composition. The SPTLC1-SPTLC2-SPTSSA complex shows a strong preference for C16-CoA substrate, while the SPTLC1-SPTLC3-SPTSSA isozyme uses both C14-CoA and C16-CoA as substrates, with a slight preference for C14-CoA. Independently of its action as a SPT component, may be involved in MBOAT7 localization to mitochondria-associated membranes, a membrane bridge between the endoplasmic reticulum and mitochondria, may hence affect MBOAT7-catalyzed incorporation of arachidonic acid into phosphatidylinositol. This is Serine palmitoyltransferase small subunit A-A (sptssa-a) from Xenopus laevis (African clawed frog).